A 248-amino-acid polypeptide reads, in one-letter code: MTTTTIQFNALLLDIEGTITSISFVKDELFPYAFENVGNYLEEHYDNPATQIIVEDLRHIADQQAENDVAVVRIREPRKECIEDVTKNVRHWIKRDKKLTPMKALQGLIWEEAYQRGDVKGHVYPDVLPVLKIVENRKIPIYIYSSGSVHAQKLLFANSIEGDMTKILYGYFDTNIGLKGESNSYTKISERIKIPPSEILFLTDVEAEAAAAKKAGLQTKLVVRPGNAGLTQEAINAYGTIESLEEIL.

2 residues coordinate Mg(2+): D14 and E16. Residues 145-146 (SS) and K179 contribute to the substrate site. Mg(2+) is bound at residue D204.

The protein belongs to the HAD-like hydrolase superfamily. MasA/MtnC family. Monomer. It depends on Mg(2+) as a cofactor.

It is found in the cytoplasm. The protein resides in the nucleus. It carries out the reaction 5-methylsulfanyl-2,3-dioxopentyl phosphate + H2O = 1,2-dihydroxy-5-(methylsulfanyl)pent-1-en-3-one + phosphate. It participates in amino-acid biosynthesis; L-methionine biosynthesis via salvage pathway; L-methionine from S-methyl-5-thio-alpha-D-ribose 1-phosphate: step 3/6. It functions in the pathway amino-acid biosynthesis; L-methionine biosynthesis via salvage pathway; L-methionine from S-methyl-5-thio-alpha-D-ribose 1-phosphate: step 4/6. In terms of biological role, bifunctional enzyme that catalyzes the enolization of 2,3-diketo-5-methylthiopentyl-1-phosphate (DK-MTP-1-P) into the intermediate 2-hydroxy-3-keto-5-methylthiopentenyl-1-phosphate (HK-MTPenyl-1-P), which is then dephosphorylated to form the acireductone 1,2-dihydroxy-3-keto-5-methylthiopentene (DHK-MTPene). This chain is Enolase-phosphatase E1, found in Caenorhabditis elegans.